The primary structure comprises 242 residues: ATP synthase subunit a (242 aa).

A run of 6 helical transmembrane segments spans residues 29 to 49 (SSIY…LAFY), 84 to 104 (FIPL…LGMT), 114 to 134 (IIVT…VGFV), 140 to 160 (FLTL…IIVI), 181 to 201 (MAGH…MIYL), and 203 to 223 (FLPI…AILQ).

Belongs to the ATPase A chain family. F-type ATPases have 2 components, CF(1) - the catalytic core - and CF(0) - the membrane proton channel. CF(1) has five subunits: alpha(3), beta(3), gamma(1), delta(1), epsilon(1). CF(0) has three main subunits: a(1), b(2) and c(9-12). The alpha and beta chains form an alternating ring which encloses part of the gamma chain. CF(1) is attached to CF(0) by a central stalk formed by the gamma and epsilon chains, while a peripheral stalk is formed by the delta and b chains.

It is found in the cell inner membrane. Functionally, key component of the proton channel; it plays a direct role in the translocation of protons across the membrane. The chain is ATP synthase subunit a from Rickettsia peacockii (strain Rustic).